The following is a 369-amino-acid chain: UDP-3-O-acylglucosamine N-acyltransferase (369 aa).

The active-site Proton acceptor is the H252. The disordered stretch occupies residues 348-369 (ERRQRGENNAPAQNKQDEEKSS).

It belongs to the transferase hexapeptide repeat family. LpxD subfamily. As to quaternary structure, homotrimer.

The enzyme catalyses a UDP-3-O-[(3R)-3-hydroxyacyl]-alpha-D-glucosamine + a (3R)-hydroxyacyl-[ACP] = a UDP-2-N,3-O-bis[(3R)-3-hydroxyacyl]-alpha-D-glucosamine + holo-[ACP] + H(+). It functions in the pathway bacterial outer membrane biogenesis; LPS lipid A biosynthesis. Functionally, catalyzes the N-acylation of UDP-3-O-acylglucosamine using 3-hydroxyacyl-ACP as the acyl donor. Is involved in the biosynthesis of lipid A, a phosphorylated glycolipid that anchors the lipopolysaccharide to the outer membrane of the cell. In Cupriavidus metallidurans (strain ATCC 43123 / DSM 2839 / NBRC 102507 / CH34) (Ralstonia metallidurans), this protein is UDP-3-O-acylglucosamine N-acyltransferase.